Here is a 290-residue protein sequence, read N- to C-terminus: Lipoyl synthase (290 aa).

[4Fe-4S] cluster-binding residues include C44, C49, C55, C70, C74, C77, and S282. In terms of domain architecture, Radical SAM core spans 56–271 (WGEGTATFMI…ELLGKEMGFR (216 aa)).

Belongs to the radical SAM superfamily. Lipoyl synthase family. Requires [4Fe-4S] cluster as cofactor.

Its subcellular location is the cytoplasm. It catalyses the reaction [[Fe-S] cluster scaffold protein carrying a second [4Fe-4S](2+) cluster] + N(6)-octanoyl-L-lysyl-[protein] + 2 oxidized [2Fe-2S]-[ferredoxin] + 2 S-adenosyl-L-methionine + 4 H(+) = [[Fe-S] cluster scaffold protein] + N(6)-[(R)-dihydrolipoyl]-L-lysyl-[protein] + 4 Fe(3+) + 2 hydrogen sulfide + 2 5'-deoxyadenosine + 2 L-methionine + 2 reduced [2Fe-2S]-[ferredoxin]. It participates in protein modification; protein lipoylation via endogenous pathway; protein N(6)-(lipoyl)lysine from octanoyl-[acyl-carrier-protein]: step 2/2. Functionally, catalyzes the radical-mediated insertion of two sulfur atoms into the C-6 and C-8 positions of the octanoyl moiety bound to the lipoyl domains of lipoate-dependent enzymes, thereby converting the octanoylated domains into lipoylated derivatives. The chain is Lipoyl synthase from Flavobacterium psychrophilum (strain ATCC 49511 / DSM 21280 / CIP 103535 / JIP02/86).